The primary structure comprises 501 residues: Glycerol kinase (501 aa).

Thr-11 provides a ligand contact to ADP. Positions 11, 12, and 13 each coordinate ATP. Thr-11 is a sn-glycerol 3-phosphate binding site. Arg-15 contacts ADP. Residues Arg-81, Glu-82, Tyr-133, and Asp-242 each coordinate sn-glycerol 3-phosphate. Glycerol is bound by residues Arg-81, Glu-82, Tyr-133, Asp-242, and Gln-243. Residues Thr-264 and Gly-307 each contribute to the ADP site. ATP-binding residues include Thr-264, Gly-307, Gln-311, and Gly-409. Residues Gly-409 and Asn-413 each coordinate ADP.

Belongs to the FGGY kinase family.

It carries out the reaction glycerol + ATP = sn-glycerol 3-phosphate + ADP + H(+). It participates in polyol metabolism; glycerol degradation via glycerol kinase pathway; sn-glycerol 3-phosphate from glycerol: step 1/1. Its activity is regulated as follows. Inhibited by fructose 1,6-bisphosphate (FBP). Key enzyme in the regulation of glycerol uptake and metabolism. Catalyzes the phosphorylation of glycerol to yield sn-glycerol 3-phosphate. This chain is Glycerol kinase, found in Borreliella afzelii (strain PKo) (Borrelia afzelii).